The primary structure comprises 103 residues: Large ribosomal subunit protein uL24 (103 aa).

The protein belongs to the universal ribosomal protein uL24 family. As to quaternary structure, part of the 50S ribosomal subunit.

In terms of biological role, one of two assembly initiator proteins, it binds directly to the 5'-end of the 23S rRNA, where it nucleates assembly of the 50S subunit. Its function is as follows. One of the proteins that surrounds the polypeptide exit tunnel on the outside of the subunit. The sequence is that of Large ribosomal subunit protein uL24 from Exiguobacterium sibiricum (strain DSM 17290 / CCUG 55495 / CIP 109462 / JCM 13490 / 255-15).